We begin with the raw amino-acid sequence, 62 residues long: Alpha-elapitoxin-Pc1 (62 aa).

Disulfide bonds link Cys3–Cys24, Cys17–Cys41, Cys43–Cys54, and Cys55–Cys60.

The protein belongs to the three-finger toxin family. Short-chain subfamily. Type I alpha-neurotoxin sub-subfamily. Expressed by the venom gland.

It is found in the secreted. In terms of biological role, bird-specific neurotoxin (tested on chicken) that acts as pseudo-irreversible antagonists at the nicotinic acetylcholine receptor (nAChR) of the skeletal neuromuscular junction. Has no significant effect on the electrically-induced twitches of the rat isolated phrenic nerve-diaphragm preparation. The protein is Alpha-elapitoxin-Pc1 of Pseudechis colletti (Collett's snake).